The following is a 1208-amino-acid chain: MSLREVTNYEVSFYIPLSYSNRTHKVCKLPNGILALIISDPTDTSSSCSLTVCTGSHNDPKDIAGLAHLCEHMILSAGSKKYPDPGLFHTLIAKNNGSQNAFTTGEQTTFYFELPNTQNNGEFTFESILDVFASFFKEPLFNPLLISKEIYAIQSEHEGNISSTTKIFYHAARILANPDHPFSRFSTGNIHSLSSIPQLKKIKLKSSLNTYFENNFFGENITLCIRGPQSVNILTKLALSKFGDIKPKSAVKERSISIRTRSFRRSKSLKKRQDSSKNDYSDLKTFKILNTTWEKKYKNTMCFQQFPECNSIFINSNKVPIMRLLFPVSDKNTRFTKDDIKIYSHLWCELFGDESPGSLSYYLASKGWLTGCFAFTSEFAIGDIGLILELELTNSGWENIKRITTIVLNRLLPSFYVMNIDYLITFLKEQNLIDLVSFLYQSSEDLPMEECSKLSGILQDDLECLTPPNIFKGFKSLIEIDDPNIEKYENTKANIQWWTGQAIKFQNFLKSFMNHDNMRLLLLGNIKSGNIFDKMKNKSDICTDFFYEFEYYTANVHLASDNKFHSNSSYEFNFPTGNLFLPDCVSDPLKLQQLFLECSLKSKFATLRPQIYSEPTRTKPQLVSENQNYEMWILKEDPNFASDNKSVVSFEVLGLGIKPSPEATIHLEVLAQALFIITSSFLYPALRIGYTYEIASSSKGNVTLRFTISGFPEGVFTIVKTFVDTLKLIATDPTFLSKDTLRKARILVRNKYKNASSDNCVKLASVGLLIVLEKYIWTLEDRINALELTELESFEKFCFLFWRNPKHLVLFMQGSLEYADAINRYLNNNFTQHLKISNEGSKPTIRLYPPPSTKDLDQGTNAFISYNGHQDDPNNSIVYFIQTAQRDDIKNLTLTFLTEYLFSLTLVPDLRNKKQIGYIVLGGLRVLTDTVGIHITVMSGSSGHNLETRINEYLSYLQLQVLNRFTEFDFRRILLEPFLNLLKQNSTKQFEGSAGPVDLLNEIVANVQNGDNYTLNNKQMRQHRKVRNKIAEGRLNFQEDHEMIDISFLQKLTLKKYLAFFESKISIYSAQRSKLSIMITSPMAEKEIASRKMFLQLEAFLKINGFAIKNEDLKKIVEHSKGNPILLVKNLFTYFRRRNEVFKLGTVVLQEILKIIGMNLKQRYGSILGFSSQDGEGQEIEKFWNNDTSPIVPLQELPEPNFFRKAAF.

Zn(2+) is bound at residue histidine 68. Residue glutamate 71 is the Proton acceptor of the active site. Histidine 72 and glutamate 156 together coordinate Zn(2+). Residue serine 262 is modified to Phosphoserine.

The protein belongs to the peptidase M16 family. In terms of assembly, interacts with BUD5. Requires Zn(2+) as cofactor.

Its subcellular location is the bud neck. Its function is as follows. Probable protease. Involved in axial budding. This chain is Putative protease AXL1 (AXL1), found in Saccharomyces cerevisiae (strain ATCC 204508 / S288c) (Baker's yeast).